Here is a 260-residue protein sequence, read N- to C-terminus: Proteasome subunit alpha (260 aa).

Belongs to the peptidase T1A family. The 20S proteasome core is composed of 14 alpha and 14 beta subunits that assemble into four stacked heptameric rings, resulting in a barrel-shaped structure. The two inner rings, each composed of seven catalytic beta subunits, are sandwiched by two outer rings, each composed of seven alpha subunits. The catalytic chamber with the active sites is on the inside of the barrel. Has a gated structure, the ends of the cylinder being occluded by the N-termini of the alpha-subunits. Is capped at one or both ends by the proteasome regulatory ATPase, PAN.

It localises to the cytoplasm. With respect to regulation, the formation of the proteasomal ATPase PAN-20S proteasome complex, via the docking of the C-termini of PAN into the intersubunit pockets in the alpha-rings, triggers opening of the gate for substrate entry. Interconversion between the open-gate and close-gate conformations leads to a dynamic regulation of the 20S proteasome proteolysis activity. Component of the proteasome core, a large protease complex with broad specificity involved in protein degradation. This is Proteasome subunit alpha from Thermococcus gammatolerans (strain DSM 15229 / JCM 11827 / EJ3).